A 283-amino-acid chain; its full sequence is Tropomyosin (283 aa).

The stretch at 1 to 283 forms a coiled coil; sequence MDAIKKKMQA…LDSAFVELIL (283 aa).

The protein belongs to the tropomyosin family. As to quaternary structure, homodimer.

Tropomyosin, in association with the troponin complex, plays a central role in the calcium dependent regulation of muscle contraction. This chain is Tropomyosin, found in Locusta migratoria (Migratory locust).